Consider the following 138-residue polypeptide: Putative pre-16S rRNA nuclease (138 aa).

Belongs to the YqgF nuclease family.

Its subcellular location is the cytoplasm. Its function is as follows. Could be a nuclease involved in processing of the 5'-end of pre-16S rRNA. The protein is Putative pre-16S rRNA nuclease of Porphyromonas gingivalis (strain ATCC BAA-308 / W83).